The primary structure comprises 642 residues: Threonine--tRNA ligase (642 aa).

In terms of domain architecture, TGS spans 1–61; the sequence is MPVITLPDGS…ENDATLAIIT (61 aa). The segment at 243-534 is catalytic; the sequence is DHRKIGKQLD…LTEEFAGFFP (292 aa). 3 residues coordinate Zn(2+): cysteine 334, histidine 385, and histidine 511.

This sequence belongs to the class-II aminoacyl-tRNA synthetase family. Homodimer. Zn(2+) serves as cofactor.

Its subcellular location is the cytoplasm. The enzyme catalyses tRNA(Thr) + L-threonine + ATP = L-threonyl-tRNA(Thr) + AMP + diphosphate + H(+). Catalyzes the attachment of threonine to tRNA(Thr) in a two-step reaction: L-threonine is first activated by ATP to form Thr-AMP and then transferred to the acceptor end of tRNA(Thr). Also edits incorrectly charged L-seryl-tRNA(Thr). This Salmonella choleraesuis (strain SC-B67) protein is Threonine--tRNA ligase.